The following is a 537-amino-acid chain: Tyrosine-protein phosphatase CDC14 homolog (537 aa).

The 164-residue stretch at 182-345 (DFNWISPKFI…QVHFRAYFYE (164 aa)) folds into the Tyrosine-protein phosphatase domain. The Phosphocysteine intermediate role is filled by cysteine 286. The tract at residues 359-537 (EPLATPPRHP…PKPSKSRLIS (179 aa)) is disordered. A compositionally biased stretch (polar residues) spans 370-382 (NATNGTSQSNIST). A compositionally biased stretch (low complexity) spans 400 to 411 (PPSARRLPSASS). Positions 421-437 (ASKQSIQNENKASYSSY) are enriched in polar residues. Threonine 453 bears the Phosphothreonine mark. Phosphoserine is present on residues serine 468 and serine 470. Residues 490 to 502 (RRTSGNRWSSGSS) show a composition bias toward low complexity. Residue serine 513 is modified to Phosphoserine. Over residues 514–523 (MSSLNNTSNG) the composition is skewed to polar residues. The segment covering 526 to 537 (AKPKPSKSRLIS) has biased composition (basic residues).

This sequence belongs to the protein-tyrosine phosphatase family. Non-receptor class CDC14 subfamily. In terms of assembly, interacts with ark1 at the kinetochores. Interacts with bir1, cdc25, mid1, nbl1, pic1, and rad24. Post-translationally, phosphorylated by cds1, chk1, pmk1, and cdc2 upon Hydroxylurea and H(2)O(2) stress treatment. Phosphorylation regulates the nucleolar-to-nucleoplasmic transition. Is able to autodephosphorylate.

It localises to the nucleus. It is found in the nucleolus. Its subcellular location is the cytoplasm. The protein localises to the cytoskeleton. The protein resides in the microtubule organizing center. It localises to the spindle pole body. It carries out the reaction O-phospho-L-tyrosyl-[protein] + H2O = L-tyrosyl-[protein] + phosphate. In terms of biological role, protein phosphatase which antagonizes mitotic cyclin-dependent kinase cdc2, the inactivation of which is essential for exit from mitosis. To access its substrates, is released from nucleolar sequestration during mitosis. Plays an essential in coordinating the nuclear division cycle with cytokinesis through the cytokinesis checkpoint. Involved in chromosome segregation, where it is required for meiosis I spindle dissambly as well as for establishing two consecutive chromosome segregation phases. Allows damaged actomyosin rings to be maintained to facilitate completion of cell division in response to minor perturbation of the cell division machinery. Dephosphorylates the mitotic inducer cdc25 for its rapid degradation. Down-regulation of cdc25 activity ensures a prompt inactivation of mitotic cdc2 complexes to trigger cell division. Also dephosphorylates cdc2-phosphorylated nsk1, allowing nsk1-binding to kinetochores and spindle. Dephosphorylates ase1, which is essential for spindle midzone assembly and for continuous extension of the anaphase spindle. Tethered to the contractile ring by mid1, where it dephosphorylates cdc15. The sequence is that of Tyrosine-protein phosphatase CDC14 homolog (clp1) from Schizosaccharomyces pombe (strain 972 / ATCC 24843) (Fission yeast).